Consider the following 110-residue polypeptide: Late cornified envelope protein 1A (110 aa).

The span at 1 to 10 (MSCQQSQQQC) shows a compositional bias: low complexity. 2 disordered regions span residues 1–23 (MSCQ…CPPK) and 83–110 (QSSG…GGCC). Positions 11 to 23 (QPPPKCTPKCPPK) are enriched in pro residues. Over residues 83-95 (QSSGCCSQPSGGS) the composition is skewed to low complexity. The segment covering 96 to 110 (SCCGGDSGQHSGGCC) has biased composition (gly residues).

The protein belongs to the LCE family. Interacts with CYSRT1. In terms of tissue distribution, skin-specific. Expression was readily detected in adult trunk skin, adult arm skin, fetal skin, penal skin, vulva, esophagus and tongue. Not expressed in the cervix, rectum, lung, colon, or placenta.

Its function is as follows. Precursors of the cornified envelope of the stratum corneum. The chain is Late cornified envelope protein 1A (LCE1A) from Homo sapiens (Human).